The following is a 106-amino-acid chain: A-type ATP synthase subunit F (106 aa).

It belongs to the V-ATPase F subunit family. In terms of assembly, has multiple subunits with at least A(3), B(3), C, D, E, F, H, I and proteolipid K(x).

The protein resides in the cell membrane. Component of the A-type ATP synthase that produces ATP from ADP in the presence of a proton gradient across the membrane. This chain is A-type ATP synthase subunit F, found in Haloferax volcanii (strain ATCC 29605 / DSM 3757 / JCM 8879 / NBRC 14742 / NCIMB 2012 / VKM B-1768 / DS2) (Halobacterium volcanii).